We begin with the raw amino-acid sequence, 163 residues long: Photosystem II extrinsic protein V (163 aa).

The N-terminal stretch at 1-26 (MFKTYSKSFACILFCIFNIFVVSASA) is a signal peptide. Heme c-binding residues include Cys-63, Cys-66, His-67, and Met-130.

Belongs to the cytochrome c family. PsbV subfamily. As to quaternary structure, PSII is composed of 1 copy each of membrane proteins PsbA, PsbB, PsbC, PsbD, PsbE, PsbF, PsbH, PsbI, PsbJ, PsbK, PsbL, PsbM, PsbT, PsbY, PsbZ, Psb30/Ycf12, at least 3 peripheral proteins of the oxygen-evolving complex and a large number of cofactors. It forms dimeric complexes. Heme c is required as a cofactor.

The protein resides in the plastid. It localises to the chloroplast thylakoid membrane. In terms of biological role, one of the extrinsic, lumenal subunits of photosystem II (PSII). PSII is a light-driven water plastoquinone oxidoreductase, using light energy to abstract electrons from H(2)O, generating a proton gradient subsequently used for ATP formation. The extrinsic proteins stabilize the structure of photosystem II oxygen-evolving complex (OEC), the ion environment of oxygen evolution and protect the OEC against heat-induced inactivation. The chain is Photosystem II extrinsic protein V from Thalassiosira pseudonana (Marine diatom).